We begin with the raw amino-acid sequence, 2004 residues long: Alpha-2-macroglobulin homolog (2004 aa).

The N-terminal stretch at 1–27 (MLCCLVFKGLLSMDLLRFLLISPFALI) is a signal peptide.

It belongs to the protease inhibitor I39 (alpha-2-macroglobulin) family. Bacterial alpha-2-macroglobulin subfamily.

This chain is Alpha-2-macroglobulin homolog, found in Yersinia pestis.